Consider the following 330-residue polypeptide: Ribosomal RNA small subunit methyltransferase H (330 aa).

Residues 51–53 (GGH), D70, D118, and Q125 contribute to the S-adenosyl-L-methionine site. Positions 276–330 (STDSTPPGLPVPLPDRQPELRLLTRGAELPTEQETAANPRAASARLRAAERTREP) are disordered. The span at 311–321 (AANPRAASARL) shows a compositional bias: low complexity.

The protein belongs to the methyltransferase superfamily. RsmH family.

The protein localises to the cytoplasm. It catalyses the reaction cytidine(1402) in 16S rRNA + S-adenosyl-L-methionine = N(4)-methylcytidine(1402) in 16S rRNA + S-adenosyl-L-homocysteine + H(+). In terms of biological role, specifically methylates the N4 position of cytidine in position 1402 (C1402) of 16S rRNA. In Thermobifida fusca (strain YX), this protein is Ribosomal RNA small subunit methyltransferase H.